A 463-amino-acid polypeptide reads, in one-letter code: Casein kinase 1 (463 aa).

The Protein kinase domain occupies 9 to 278 (FKLGRKIGSG…LKRLFRDLFI (270 aa)). ATP contacts are provided by residues 15–23 (IGSGSFGEL) and Lys-38. The active-site Proton acceptor is the Asp-128. Over residues 296–306 (ESNRLRSSGRT) the composition is skewed to polar residues. Residues 296–448 (ESNRLRSSGR…TARNVHDDPT (153 aa)) form a disordered region. Basic and acidic residues predominate over residues 315–328 (ERTERAAARQDVPD). Polar residues-rich tracts occupy residues 376–396 (TSSS…SRPS) and 404–440 (NRSN…TKTA).

It belongs to the protein kinase superfamily. CK1 Ser/Thr protein kinase family. Casein kinase I subfamily. In terms of assembly, monomer. Autophosphorylated. In terms of tissue distribution, expressed in leaves, stems, panicles and seeds. Expressed in root tissues and lamina joints.

It localises to the cytoplasm. It is found in the nucleus. The catalysed reaction is L-seryl-[protein] + ATP = O-phospho-L-seryl-[protein] + ADP + H(+). It catalyses the reaction L-threonyl-[protein] + ATP = O-phospho-L-threonyl-[protein] + ADP + H(+). Its activity is regulated as follows. Inhibited by N-(2-aminoethyl)-5-chloroisoquinoline-8-sulfonamide (CKI-7). Its function is as follows. Casein kinases are operationally defined by their preferential utilization of acidic proteins such as caseins as substrates. Can phosphorylate casein in vitro. Required for normal root development through modulation of cell elongation. Plants silencing CKI1 show abnormal root development, with reduced number of lateral and adventitious roots, and shortened primary roots as a result of reduced cell elongation. May be involved in abscisic acid (ABA) and brassinosteroid (BR) signaling pathways. Plays an important role in the adaptive growth and fitness under low temperature (LT) conditions. May confer tolerance to LT through an auxin-dependent process. This is Casein kinase 1 (CKI1) from Oryza sativa subsp. japonica (Rice).